Reading from the N-terminus, the 575-residue chain is Glutathione hydrolase proenzyme (575 aa).

Positions 1 to 24 are cleaved as a signal peptide; it reads MKNQTFSKALLATALSCALFNVHA. R100 is an L-glutamate binding site. The active-site Nucleophile is the T376. Residues T394, N396, E415, D418, 447–448, and 468–469 each bind L-glutamate; these read SS and GG.

Belongs to the gamma-glutamyltransferase family. As to quaternary structure, this enzyme consists of two polypeptide chains, which are synthesized in precursor form from a single polypeptide. Post-translationally, cleaved by autocatalysis into a large and a small subunit.

The protein resides in the periplasm. The enzyme catalyses an N-terminal (5-L-glutamyl)-[peptide] + an alpha-amino acid = 5-L-glutamyl amino acid + an N-terminal L-alpha-aminoacyl-[peptide]. It carries out the reaction glutathione + H2O = L-cysteinylglycine + L-glutamate. The catalysed reaction is an S-substituted glutathione + H2O = an S-substituted L-cysteinylglycine + L-glutamate. Its pathway is sulfur metabolism; glutathione metabolism. The protein is Glutathione hydrolase proenzyme (ggt) of Pseudomonas sp. (strain A14).